Here is a 674-residue protein sequence, read N- to C-terminus: tRNA 5-methylaminomethyl-2-thiouridine biosynthesis bifunctional protein MnmC (674 aa).

The interval 1–248 (MAASSLPSHN…KREMCFGRYA (248 aa)) is tRNA (mnm(5)s(2)U34)-methyltransferase. Residues 276–674 (IGAGLAGATV…AIRHWRSGKR (399 aa)) form an FAD-dependent cmnm(5)s(2)U34 oxidoreductase region.

In the N-terminal section; belongs to the methyltransferase superfamily. tRNA (mnm(5)s(2)U34)-methyltransferase family. This sequence in the C-terminal section; belongs to the DAO family. FAD serves as cofactor.

It localises to the cytoplasm. The enzyme catalyses 5-aminomethyl-2-thiouridine(34) in tRNA + S-adenosyl-L-methionine = 5-methylaminomethyl-2-thiouridine(34) in tRNA + S-adenosyl-L-homocysteine + H(+). In terms of biological role, catalyzes the last two steps in the biosynthesis of 5-methylaminomethyl-2-thiouridine (mnm(5)s(2)U) at the wobble position (U34) in tRNA. Catalyzes the FAD-dependent demodification of cmnm(5)s(2)U34 to nm(5)s(2)U34, followed by the transfer of a methyl group from S-adenosyl-L-methionine to nm(5)s(2)U34, to form mnm(5)s(2)U34. This is tRNA 5-methylaminomethyl-2-thiouridine biosynthesis bifunctional protein MnmC from Hydrogenovibrio crunogenus (strain DSM 25203 / XCL-2) (Thiomicrospira crunogena).